The sequence spans 184 residues: ATP-dependent protease subunit HslV (184 aa).

Threonine 12 is a catalytic residue. Residues alanine 166, cysteine 169, and threonine 172 each contribute to the Na(+) site.

This sequence belongs to the peptidase T1B family. HslV subfamily. In terms of assembly, a double ring-shaped homohexamer of HslV is capped on each side by a ring-shaped HslU homohexamer. The assembly of the HslU/HslV complex is dependent on binding of ATP.

Its subcellular location is the cytoplasm. The catalysed reaction is ATP-dependent cleavage of peptide bonds with broad specificity.. Its activity is regulated as follows. Allosterically activated by HslU binding. Its function is as follows. Protease subunit of a proteasome-like degradation complex believed to be a general protein degrading machinery. This Nitrobacter winogradskyi (strain ATCC 25391 / DSM 10237 / CIP 104748 / NCIMB 11846 / Nb-255) protein is ATP-dependent protease subunit HslV.